Reading from the N-terminus, the 574-residue chain is 2-succinyl-5-enolpyruvyl-6-hydroxy-3-cyclohexene-1-carboxylate synthase (574 aa).

This sequence belongs to the TPP enzyme family. MenD subfamily. In terms of assembly, homodimer. Mg(2+) serves as cofactor. The cofactor is Mn(2+). Thiamine diphosphate is required as a cofactor.

The enzyme catalyses isochorismate + 2-oxoglutarate + H(+) = 5-enolpyruvoyl-6-hydroxy-2-succinyl-cyclohex-3-ene-1-carboxylate + CO2. It participates in quinol/quinone metabolism; 1,4-dihydroxy-2-naphthoate biosynthesis; 1,4-dihydroxy-2-naphthoate from chorismate: step 2/7. Its pathway is cofactor biosynthesis; phylloquinone biosynthesis. Functionally, catalyzes the thiamine diphosphate-dependent decarboxylation of 2-oxoglutarate and the subsequent addition of the resulting succinic semialdehyde-thiamine pyrophosphate anion to isochorismate to yield 2-succinyl-5-enolpyruvyl-6-hydroxy-3-cyclohexene-1-carboxylate (SEPHCHC). This chain is 2-succinyl-5-enolpyruvyl-6-hydroxy-3-cyclohexene-1-carboxylate synthase, found in Prochlorococcus marinus (strain SARG / CCMP1375 / SS120).